Here is a 445-residue protein sequence, read N- to C-terminus: Ribosomal protein uS12 methylthiotransferase RimO (445 aa).

Positions 10–120 (PKVGFVSLGC…VVNAVHEVVP (111 aa)) constitute an MTTase N-terminal domain. Cys19, Cys55, Cys84, Cys153, Cys157, and Cys160 together coordinate [4Fe-4S] cluster. The region spanning 139–378 (LTPRHYAYLK…AHQQEISSAR (240 aa)) is the Radical SAM core domain. The 66-residue stretch at 380 to 445 (QQRIGKEIEV…DEYDLWAETL (66 aa)) folds into the TRAM domain.

This sequence belongs to the methylthiotransferase family. RimO subfamily. The cofactor is [4Fe-4S] cluster.

The protein localises to the cytoplasm. It catalyses the reaction L-aspartate(89)-[ribosomal protein uS12]-hydrogen + (sulfur carrier)-SH + AH2 + 2 S-adenosyl-L-methionine = 3-methylsulfanyl-L-aspartate(89)-[ribosomal protein uS12]-hydrogen + (sulfur carrier)-H + 5'-deoxyadenosine + L-methionine + A + S-adenosyl-L-homocysteine + 2 H(+). Its function is as follows. Catalyzes the methylthiolation of an aspartic acid residue of ribosomal protein uS12. The sequence is that of Ribosomal protein uS12 methylthiotransferase RimO from Pseudomonas fluorescens (strain ATCC BAA-477 / NRRL B-23932 / Pf-5).